A 186-amino-acid chain; its full sequence is uncharacterized protein (186 aa).

In terms of domain architecture, N-acetyltransferase spans 12–184 (LLKSPVEEDD…HIYKLSKQIR (173 aa)).

This sequence belongs to the acetyltransferase family.

It is found in the cytoplasm. The protein resides in the nucleus. This is an uncharacterized protein from Schizosaccharomyces pombe (strain 972 / ATCC 24843) (Fission yeast).